The following is a 383-amino-acid chain: Methenyltetrahydrofolate synthase domain-containing protein (383 aa).

The disordered stretch occupies residues 249–301; sequence AGKDVTLQGEHQHLPEPGCQQTVPLSVGRRPPDTPGPETNSMEAAPGSPPGEG. Residues 306–379 form the RRM domain; sequence ADVYVGNLPG…DTLRVALARQ (74 aa).

The protein is Methenyltetrahydrofolate synthase domain-containing protein (MTHFSD) of Homo sapiens (Human).